The primary structure comprises 1573 residues: Pentafunctional AROM polypeptide (1573 aa).

The tract at residues 1 to 384 (MSNESNIITV…YEKHATVVSD (384 aa)) is 3-dehydroquinate synthase. NAD(+) contacts are provided by residues 46–48 (DSN), 83–86 (ESSK), 114–116 (GGV), and Asp-119. A 7-phospho-2-dehydro-3-deoxy-D-arabino-heptonate-binding site is contributed by Arg-130. Residue 139-140 (TT) coordinates NAD(+). Residues Asp-146 and Lys-152 each coordinate 7-phospho-2-dehydro-3-deoxy-D-arabino-heptonate. Lys-161 contributes to the NAD(+) binding site. Asn-162 serves as a coordination point for 7-phospho-2-dehydro-3-deoxy-D-arabino-heptonate. Residues 179–182 (FLHT) and Asn-190 contribute to the NAD(+) site. Residue Glu-194 participates in Zn(2+) binding. 7-phospho-2-dehydro-3-deoxy-D-arabino-heptonate-binding positions include 194–197 (EIIK) and Lys-250. Glu-260 serves as the catalytic Proton acceptor; for 3-dehydroquinate synthase activity. Residues 264 to 268 (RNLLN) and His-271 contribute to the 7-phospho-2-dehydro-3-deoxy-D-arabino-heptonate site. His-271 provides a ligand contact to Zn(2+). His-275 functions as the Proton acceptor; for 3-dehydroquinate synthase activity in the catalytic mechanism. 7-phospho-2-dehydro-3-deoxy-D-arabino-heptonate is bound by residues His-287 and Lys-356. His-287 is a Zn(2+) binding site. Positions 397 to 843 (VDEFTKSSWD…WDVLHQSFGV (447 aa)) are EPSP synthase. Cys-825 functions as the For EPSP synthase activity in the catalytic mechanism. The shikimate kinase stretch occupies residues 863 to 1058 (NASIILIGMR…KTKKRSTFLT (196 aa)). Residue 870–877 (GMRGAGKT) participates in ATP binding. Residues 1059–1280 (LNYPRIEDAL…AAPGQLTVKQ (222 aa)) are 3-dehydroquinase. His-1182 (proton acceptor; for 3-dehydroquinate dehydratase activity) is an active-site residue. Residue Lys-1211 is the Schiff-base intermediate with substrate; for 3-dehydroquinate dehydratase activity of the active site. Positions 1293–1573 (PEKFFLFGKP…FDAVYQKVIE (281 aa)) are shikimate dehydrogenase.

This sequence in the N-terminal section; belongs to the sugar phosphate cyclases superfamily. Dehydroquinate synthase family. It in the 2nd section; belongs to the EPSP synthase family. The protein in the 3rd section; belongs to the shikimate kinase family. In the 4th section; belongs to the type-I 3-dehydroquinase family. This sequence in the C-terminal section; belongs to the shikimate dehydrogenase family. In terms of assembly, homodimer. Zn(2+) serves as cofactor.

The protein resides in the cytoplasm. It catalyses the reaction 7-phospho-2-dehydro-3-deoxy-D-arabino-heptonate = 3-dehydroquinate + phosphate. It carries out the reaction 3-dehydroquinate = 3-dehydroshikimate + H2O. The enzyme catalyses shikimate + NADP(+) = 3-dehydroshikimate + NADPH + H(+). The catalysed reaction is shikimate + ATP = 3-phosphoshikimate + ADP + H(+). It catalyses the reaction 3-phosphoshikimate + phosphoenolpyruvate = 5-O-(1-carboxyvinyl)-3-phosphoshikimate + phosphate. It participates in metabolic intermediate biosynthesis; chorismate biosynthesis; chorismate from D-erythrose 4-phosphate and phosphoenolpyruvate: step 2/7. It functions in the pathway metabolic intermediate biosynthesis; chorismate biosynthesis; chorismate from D-erythrose 4-phosphate and phosphoenolpyruvate: step 3/7. Its pathway is metabolic intermediate biosynthesis; chorismate biosynthesis; chorismate from D-erythrose 4-phosphate and phosphoenolpyruvate: step 4/7. The protein operates within metabolic intermediate biosynthesis; chorismate biosynthesis; chorismate from D-erythrose 4-phosphate and phosphoenolpyruvate: step 5/7. It participates in metabolic intermediate biosynthesis; chorismate biosynthesis; chorismate from D-erythrose 4-phosphate and phosphoenolpyruvate: step 6/7. The AROM polypeptide catalyzes 5 consecutive enzymatic reactions in prechorismate polyaromatic amino acid biosynthesis. In Schizosaccharomyces pombe (strain 972 / ATCC 24843) (Fission yeast), this protein is Pentafunctional AROM polypeptide.